Here is a 360-residue protein sequence, read N- to C-terminus: uncharacterized protein (360 aa).

4-22 (KVLHIGAGGFGERWCDTFL) lines the NAD(+) pocket.

Could be a NAD-dependent oxidoreductase. This is an uncharacterized protein from Sinorhizobium fredii (strain NBRC 101917 / NGR234).